Consider the following 590-residue polypeptide: Protein OS-9 homolog (590 aa).

The N-terminal stretch at 1 to 19 is a signal peptide; it reads MRRPSLALLALSSLPFGSA. The tract at residues 83-106 is disordered; that stretch reads SAIRESATANADTDNGDESIGGTS. A glycan (N-linked (GlcNAc...) asparagine) is linked at Asn136. The MRH domain occupies 167 to 312; sequence NQCLHFVSGW…VIHTPRLCAD (146 aa). Residues Cys169 and Cys182 are joined by a disulfide bond. Residues Trp176, Trp177, and Gln189 each coordinate a mannooligosaccharide derivative. The segment at 198–248 is disordered; sequence GGPPLRDKNSQEYILGTSLPPSSHSQKGKQIEVPNNEQKQLSPPPNTELQA. 2 disulfides stabilise this stretch: Cys265-Cys298 and Cys280-Cys310. A mannooligosaccharide derivative contacts are provided by Asp266, Arg272, Glu294, and Tyr300. 3 disordered regions span residues 357–376, 436–472, and 545–590; these read AAVTTEDQKQGSESGSPEKL, GDDNNNNNNNHHPKAGKGRKAAGAGKGQSGQKEMKKM, and YEDE…RDEL. The segment covering 446–455 has biased composition (basic residues); sequence HHPKAGKGRK. Composition is skewed to basic and acidic residues over residues 556–568 and 579–590; these read EAGKDQKESKKGG and EGSKEEYYRDEL. The Prevents secretion from ER motif lies at 587–590; the sequence is RDEL.

The protein belongs to the OS-9 family. Interacts with missfolded ER lumenal proteins.

The protein localises to the endoplasmic reticulum membrane. In terms of biological role, lectin involved in the quality control of the secretory pathway. As a member of the endoplasmic reticulum-associated degradation lumenal (ERAD-L) surveillance system, targets misfolded endoplasmic reticulum lumenal glycoproteins for degradation. This chain is Protein OS-9 homolog (yos-9), found in Neurospora crassa (strain ATCC 24698 / 74-OR23-1A / CBS 708.71 / DSM 1257 / FGSC 987).